A 305-amino-acid polypeptide reads, in one-letter code: Oxygen-dependent coproporphyrinogen-III oxidase (305 aa).

Ser94 contributes to the substrate binding site. A divalent metal cation contacts are provided by His98 and His108. The active-site Proton donor is the His108. 110–112 (NVR) contacts substrate. Residues His147 and His177 each coordinate a divalent metal cation. An important for dimerization region spans residues 242 to 277 (YVEFNLVYDRGTLFGLQTGGRTESILMSMPPLVRWE). 260–262 (GGR) is a binding site for substrate.

The protein belongs to the aerobic coproporphyrinogen-III oxidase family. Homodimer. Requires a divalent metal cation as cofactor.

The protein resides in the cytoplasm. It catalyses the reaction coproporphyrinogen III + O2 + 2 H(+) = protoporphyrinogen IX + 2 CO2 + 2 H2O. It participates in porphyrin-containing compound metabolism; protoporphyrin-IX biosynthesis; protoporphyrinogen-IX from coproporphyrinogen-III (O2 route): step 1/1. Involved in the heme biosynthesis. Catalyzes the aerobic oxidative decarboxylation of propionate groups of rings A and B of coproporphyrinogen-III to yield the vinyl groups in protoporphyrinogen-IX. The polypeptide is Oxygen-dependent coproporphyrinogen-III oxidase (Shewanella denitrificans (strain OS217 / ATCC BAA-1090 / DSM 15013)).